Here is a 687-residue protein sequence, read N- to C-terminus: DNA-directed RNA polymerase subunit beta' (687 aa).

Positions 76, 78, 94, and 97 each coordinate Zn(2+). Mg(2+) contacts are provided by D496, D498, and D500.

It belongs to the RNA polymerase beta' chain family. RpoC1 subfamily. In terms of assembly, in plastids the minimal PEP RNA polymerase catalytic core is composed of four subunits: alpha, beta, beta', and beta''. When a (nuclear-encoded) sigma factor is associated with the core the holoenzyme is formed, which can initiate transcription. Mg(2+) is required as a cofactor. It depends on Zn(2+) as a cofactor.

It is found in the plastid. The protein localises to the chloroplast. The catalysed reaction is RNA(n) + a ribonucleoside 5'-triphosphate = RNA(n+1) + diphosphate. Functionally, DNA-dependent RNA polymerase catalyzes the transcription of DNA into RNA using the four ribonucleoside triphosphates as substrates. In Ipomoea purpurea (Common morning glory), this protein is DNA-directed RNA polymerase subunit beta'.